Reading from the N-terminus, the 136-residue chain is Large-conductance mechanosensitive channel (136 aa).

A run of 2 helical transmembrane segments spans residues 9 to 29 (AFAS…GAAF) and 79 to 99 (IQTV…LKAI).

The protein belongs to the MscL family. Homopentamer.

The protein resides in the cell inner membrane. Its function is as follows. Channel that opens in response to stretch forces in the membrane lipid bilayer. May participate in the regulation of osmotic pressure changes within the cell. This chain is Large-conductance mechanosensitive channel, found in Shewanella sp. (strain W3-18-1).